A 117-amino-acid chain; its full sequence is Urease subunit beta (117 aa).

Positions 95-117 are disordered; that stretch reads NAVNGKLDGGPHPGVPATERGAK.

This sequence belongs to the urease beta subunit family. Heterotrimer of UreA (gamma), UreB (beta) and UreC (alpha) subunits. Three heterotrimers associate to form the active enzyme.

Its subcellular location is the cytoplasm. It carries out the reaction urea + 2 H2O + H(+) = hydrogencarbonate + 2 NH4(+). It functions in the pathway nitrogen metabolism; urea degradation; CO(2) and NH(3) from urea (urease route): step 1/1. The polypeptide is Urease subunit beta (Pseudarthrobacter chlorophenolicus (strain ATCC 700700 / DSM 12829 / CIP 107037 / JCM 12360 / KCTC 9906 / NCIMB 13794 / A6) (Arthrobacter chlorophenolicus)).